The chain runs to 81 residues: ATP synthase subunit c, chloroplastic (81 aa).

2 helical membrane-spanning segments follow: residues 3–23 (PLIA…ASIG) and 57–77 (LAFM…LLFA).

Belongs to the ATPase C chain family. F-type ATPases have 2 components, F(1) - the catalytic core - and F(0) - the membrane proton channel. F(1) has five subunits: alpha(3), beta(3), gamma(1), delta(1), epsilon(1). F(0) has four main subunits: a(1), b(1), b'(1) and c(10-14). The alpha and beta chains form an alternating ring which encloses part of the gamma chain. F(1) is attached to F(0) by a central stalk formed by the gamma and epsilon chains, while a peripheral stalk is formed by the delta, b and b' chains.

It is found in the plastid. Its subcellular location is the chloroplast thylakoid membrane. F(1)F(0) ATP synthase produces ATP from ADP in the presence of a proton or sodium gradient. F-type ATPases consist of two structural domains, F(1) containing the extramembraneous catalytic core and F(0) containing the membrane proton channel, linked together by a central stalk and a peripheral stalk. During catalysis, ATP synthesis in the catalytic domain of F(1) is coupled via a rotary mechanism of the central stalk subunits to proton translocation. Its function is as follows. Key component of the F(0) channel; it plays a direct role in translocation across the membrane. A homomeric c-ring of between 10-14 subunits forms the central stalk rotor element with the F(1) delta and epsilon subunits. The protein is ATP synthase subunit c, chloroplastic of Chaetosphaeridium globosum (Charophycean green alga).